Reading from the N-terminus, the 574-residue chain is Septation ring formation regulator EzrA (574 aa).

Topologically, residues 1 to 7 (MSSGIIL) are extracellular. A helical transmembrane segment spans residues 8 to 26 (LIVAIVLLVIIAYLVGVII). Residues 27–574 (RKRNDSLITS…YEKTREHIRF (548 aa)) are Cytoplasmic-facing. Coiled coils occupy residues 102–141 (NFIR…EEKN), 274–350 (ELVT…ETES), and 459–520 (QLEA…SFEA).

The protein belongs to the EzrA family.

Its subcellular location is the cell membrane. Its function is as follows. Negative regulator of FtsZ ring formation; modulates the frequency and position of FtsZ ring formation. Inhibits FtsZ ring formation at polar sites. Interacts either with FtsZ or with one of its binding partners to promote depolymerization. The sequence is that of Septation ring formation regulator EzrA from Streptococcus pyogenes serotype M4 (strain MGAS10750).